The chain runs to 506 residues: Serine/threonine-protein kinase RIO1 (506 aa).

The interval 22-52 is disordered; sequence TASSSSDDEPEQAVVKQEKLEAGEQIEEQYD. The region spanning 142 to 506 is the Protein kinase domain; that stretch reads LNIDGCISTG…KKRAHRQHMK (365 aa). ATP-binding positions include 148–156, lysine 169, and leucine 241; that span reads ISTGKEANV. The Proton acceptor role is filled by aspartate 285. Asparagine 290 is a binding site for ATP. 2 residues coordinate Mg(2+): asparagine 290 and aspartate 302. Aspartate 302 acts as the 4-aspartylphosphate intermediate in catalysis. The tract at residues 418-506 is disordered; the sequence is GDGFGEEHDD…KKRAHRQHMK (89 aa). The span at 424–435 shows a compositional bias: acidic residues; it reads EHDDSDDNDDEE. Residues 454-490 show a composition bias toward basic and acidic residues; that stretch reads EKERKIAMHTRNREETAEERKERKAAVKEEKREQRKE. A compositionally biased stretch (basic residues) spans 491-506; it reads KIPKHLKKRAHRQHMK.

It belongs to the protein kinase superfamily. RIO-type Ser/Thr kinase family. Requires Mg(2+) as cofactor. As to expression, expressed in vulva and uterine cells, uterine seam cells (utse), spermatheca and in the nervous system including chemosensory neurons in the head, nerve ring neurons (RID/RIF), inhibitory motor neurons (DA/DD/VA/VD), mechanosensory neurons (ALML/PLML) and tail sensory neurons (DVA//PDA). Also expressed in intestine and pharynx (procorpus) and rectal valve and gland.

Its subcellular location is the cytoplasm. The catalysed reaction is L-seryl-[protein] + ATP = O-phospho-L-seryl-[protein] + ADP + H(+). It carries out the reaction L-threonyl-[protein] + ATP = O-phospho-L-threonyl-[protein] + ADP + H(+). Its function is as follows. Involved in the final steps of cytoplasmic maturation of the 40S ribosomal subunit. Despite the protein kinase domain is proposed to act predominantly as an ATPase. The catalytic activity regulates its dynamic association with the 40S subunit. Plays a role in oogenesis by regulating germ cell proliferation, progression through diplotene and diakinesis stages and oocyte maturation. Regulates germline development probably by regulating the phosphorylation of mpk-1. Involved in larval development. This Caenorhabditis elegans protein is Serine/threonine-protein kinase RIO1.